The following is a 751-amino-acid chain: Catalase-peroxidase (751 aa).

A disordered region spans residues 1-21 (MSNESKCPFHQTAGGGTTNRD). The tryptophyl-tyrosyl-methioninium (Trp-Tyr) (with M-270) cross-link spans 90 to 244 (WHSAGTYRIG…LAAVQMGLIY (155 aa)). The active-site Proton acceptor is His91. The interval 195–227 (YGKDQVKAQPPGQGDLVAEPAKHGEEQNRDLSA) is disordered. Over residues 214 to 227 (PAKHGEEQNRDLSA) the composition is skewed to basic and acidic residues. A cross-link (tryptophyl-tyrosyl-methioninium (Tyr-Met) (with W-90)) is located at residues 244–270 (YVNPEGPEGNPDPVASGKDIRETFGRM). His285 contributes to the heme b binding site. The segment at 364-385 (GAHQWRPKDGKGAGTVPDAHDP) is disordered.

Belongs to the peroxidase family. Peroxidase/catalase subfamily. Homodimer or homotetramer. It depends on heme b as a cofactor. In terms of processing, formation of the three residue Trp-Tyr-Met cross-link is important for the catalase, but not the peroxidase activity of the enzyme.

The enzyme catalyses H2O2 + AH2 = A + 2 H2O. It carries out the reaction 2 H2O2 = O2 + 2 H2O. Bifunctional enzyme with both catalase and broad-spectrum peroxidase activity. The chain is Catalase-peroxidase from Pseudomonas putida (strain ATCC 47054 / DSM 6125 / CFBP 8728 / NCIMB 11950 / KT2440).